A 78-amino-acid chain; its full sequence is Defensin-like protein 287 (78 aa).

The N-terminal stretch at 1–24 is a signal peptide; sequence MNNLRVIMSVLLAVLVFTATVSES. Intrachain disulfides connect C39–C59, C45–C64, and C51–C66.

It belongs to the DEFL family.

The protein localises to the secreted. The protein is Defensin-like protein 287 of Arabidopsis thaliana (Mouse-ear cress).